We begin with the raw amino-acid sequence, 156 residues long: Ribosomal RNA large subunit methyltransferase H (156 aa).

S-adenosyl-L-methionine-binding positions include L73, G104, and 123-128 (VSSLTL).

This sequence belongs to the RNA methyltransferase RlmH family. Homodimer.

The protein localises to the cytoplasm. It carries out the reaction pseudouridine(1915) in 23S rRNA + S-adenosyl-L-methionine = N(3)-methylpseudouridine(1915) in 23S rRNA + S-adenosyl-L-homocysteine + H(+). Its function is as follows. Specifically methylates the pseudouridine at position 1915 (m3Psi1915) in 23S rRNA. This chain is Ribosomal RNA large subunit methyltransferase H, found in Paraburkholderia phytofirmans (strain DSM 17436 / LMG 22146 / PsJN) (Burkholderia phytofirmans).